The sequence spans 85 residues: MAHKKGQGSTQNNRDSAGRRLGVKKFGGEFVRAGNIIIRQRGTKVHPGNNVGLGKDHTIFALIDGVVKFERYGKDRQKVSVYPVE.

Residues 1–21 form a disordered region; the sequence is MAHKKGQGSTQNNRDSAGRRL.

Belongs to the bacterial ribosomal protein bL27 family.

The sequence is that of Large ribosomal subunit protein bL27 from Nitratiruptor sp. (strain SB155-2).